A 378-amino-acid chain; its full sequence is MSPMNRQRKNKSNVLNEKDERPGCIIKEKSSVRSMAKTQPTSGRTISLSEINKPIALSKKNTEIKAAVEIQNRLTKKMAKNSERRKKMAHGPEMTAQNRTQERIDFVEFLDRHYQVMQAGVSTVKVHKMHYTKEEFENVIYEAQTIFSSEKALVDIDPPCVVVGNLHGQFNDLINMFILLGRPPETVYVFTECVTSIPKCGEEIWALFQRCFNNLPISALIATKILCMHGGLSPALTCLDELRNHPKPIRNPFRGIVNDMLWADPDPSVFEWKTSSRGSGFTFGTNVIDDVCKRLGVELIIRAHQMCFDGYWVLSGRKLITIFSAPMYCNFYKNTGCVLKVDETLGIQTVAFVPESENIEKIIEEMNRVWDISIDCIE.

The span at 1-11 shows a compositional bias: basic residues; the sequence is MSPMNRQRKNK. The segment at 1-23 is disordered; that stretch reads MSPMNRQRKNKSNVLNEKDERPG.

This is an uncharacterized protein from Caenorhabditis elegans.